The sequence spans 472 residues: NADH-quinone oxidoreductase subunit N (472 aa).

14 helical membrane passes run 11-31 (AELS…FLPA), 43-63 (ILLT…LFGG), 67-87 (STPM…LVFL), 103-123 (GEFY…VSAG), 125-145 (FLLF…LVAF), 159-179 (FILS…MIYG), 200-220 (VLAL…VPFH), 234-254 (VSAY…MIIL), 265-285 (WSEI…LFAI), 293-313 (FMAF…LAGT), 318-338 (ASLV…FGVI), 362-384 (PKLT…FAGF), 401-421 (LIVF…LLIV), and 446-466 (LLVC…YQLL).

Belongs to the complex I subunit 2 family. In terms of assembly, NDH-1 is composed of 14 different subunits. Subunits NuoA, H, J, K, L, M, N constitute the membrane sector of the complex.

It is found in the cell inner membrane. The catalysed reaction is a quinone + NADH + 5 H(+)(in) = a quinol + NAD(+) + 4 H(+)(out). In terms of biological role, NDH-1 shuttles electrons from NADH, via FMN and iron-sulfur (Fe-S) centers, to quinones in the respiratory chain. The immediate electron acceptor for the enzyme in this species is believed to be a menaquinone. Couples the redox reaction to proton translocation (for every two electrons transferred, four hydrogen ions are translocated across the cytoplasmic membrane), and thus conserves the redox energy in a proton gradient. The protein is NADH-quinone oxidoreductase subunit N of Phocaeicola vulgatus (strain ATCC 8482 / DSM 1447 / JCM 5826 / CCUG 4940 / NBRC 14291 / NCTC 11154) (Bacteroides vulgatus).